Reading from the N-terminus, the 98-residue chain is U11-barytoxin-Tl1b (98 aa).

Residues 1–21 (MKTLVLVAVLGLASLYLLSYA) form the signal peptide. Residues 22–50 (SEVQQLSRDEEEFRALVASFGGLFDTEER) constitute a propeptide that is removed on maturation. Cystine bridges form between Cys-57/Cys-71, Cys-64/Cys-76, and Cys-70/Cys-89.

Belongs to the neurotoxin 10 (Hwtx-1) family. 25 (ICK4) subfamily. Expressed by the venom gland.

The protein resides in the secreted. Ion channel inhibitor. The protein is U11-barytoxin-Tl1b of Trittame loki (Brush-footed trapdoor spider).